The chain runs to 625 residues: 1-deoxy-D-xylulose-5-phosphate synthase 1 (625 aa).

Thiamine diphosphate contacts are provided by residues histidine 74 and 115–117; that span reads GHT. Residue aspartate 146 coordinates Mg(2+). Thiamine diphosphate-binding positions include 147–148, asparagine 175, tyrosine 286, and glutamate 368; that span reads GS. Asparagine 175 contacts Mg(2+).

Belongs to the transketolase family. DXPS subfamily. As to quaternary structure, homodimer. Requires Mg(2+) as cofactor. The cofactor is thiamine diphosphate.

The enzyme catalyses D-glyceraldehyde 3-phosphate + pyruvate + H(+) = 1-deoxy-D-xylulose 5-phosphate + CO2. It functions in the pathway metabolic intermediate biosynthesis; 1-deoxy-D-xylulose 5-phosphate biosynthesis; 1-deoxy-D-xylulose 5-phosphate from D-glyceraldehyde 3-phosphate and pyruvate: step 1/1. Catalyzes the acyloin condensation reaction between C atoms 2 and 3 of pyruvate and glyceraldehyde 3-phosphate to yield 1-deoxy-D-xylulose-5-phosphate (DXP). The sequence is that of 1-deoxy-D-xylulose-5-phosphate synthase 1 from Geobacter metallireducens (strain ATCC 53774 / DSM 7210 / GS-15).